The sequence spans 327 residues: Ribonucleoside-diphosphate reductase small chain (327 aa).

Residues Asp70, Glu101, and His104 each contribute to the Fe cation site. Residue Tyr108 is part of the active site. Fe cation is bound by residues Glu164, Glu198, and His201.

It belongs to the ribonucleoside diphosphate reductase small chain family. As to quaternary structure, heterotetramer composed of a homodimer of the large subunit (R1) and a homodimer of the small subunit (R2). Larger multisubunit protein complex are also active, composed of (R1)n(R2)n. The cofactor is Fe cation.

It carries out the reaction a 2'-deoxyribonucleoside 5'-diphosphate + [thioredoxin]-disulfide + H2O = a ribonucleoside 5'-diphosphate + [thioredoxin]-dithiol. Functionally, ribonucleoside-diphosphate reductase holoenzyme provides the precursors necessary for viral DNA synthesis. Allows virus growth in non-dividing cells. Catalyzes the biosynthesis of deoxyribonucleotides from the corresponding ribonucleotides. In Ornithodoros (relapsing fever ticks), this protein is Ribonucleoside-diphosphate reductase small chain.